Here is a 163-residue protein sequence, read N- to C-terminus: Low molecular weight protein-tyrosine phosphatase A (163 aa).

Residue cysteine 11 is the Nucleophile of the active site. The active site involves arginine 17. Aspartate 126 serves as the catalytic Proton donor.

The protein belongs to the low molecular weight phosphotyrosine protein phosphatase family.

It catalyses the reaction O-phospho-L-tyrosyl-[protein] + H2O = L-tyrosyl-[protein] + phosphate. In terms of biological role, key virulence factor required for mycobacterial survival within host macrophages. Exhibits protein tyrosine phosphatase activity. Functionally, supports mycobacteria survival during infection by modulation of the phagosome maturation and modulation of the normal host signaling pathways, including host innate immune responses and cell apoptosis. In Mycobacterium bovis (strain ATCC BAA-935 / AF2122/97), this protein is Low molecular weight protein-tyrosine phosphatase A (ptpA).